The primary structure comprises 773 residues: Angiomotin-like protein 2 (773 aa).

Disordered stretches follow at residues 41–157 (GGAG…HVRS), 169–238 (RNGA…SPHF), and 259–309 (QYQY…LAQM). 3 stretches are compositionally biased toward basic and acidic residues: residues 80 to 91 (QGGETHLAENRL), 100 to 112 (KGEE…EAKA), and 141 to 152 (RRQDEALRELRH). Residues 101 to 302 (GEELPTYEEA…GPPGAQATSG (202 aa)) are required for interaction with CDH5. The residue at position 107 (Tyr107) is a Phosphotyrosine; by FGFR1. Positions 177–190 (HMSSSHSFPQLARS) are enriched in polar residues. The segment covering 196–213 (PRGPPAEGPEPRGPPPQY) has biased composition (pro residues). The interval 220–302 (QETAAVNDPR…GPPGAQATSG (83 aa)) is required for interaction with CDH1. A coiled-coil region spans residues 304 to 577 (AHLAQMESVL…KYLEERAMRQ (274 aa)). Glycyl lysine isopeptide (Lys-Gly) (interchain with G-Cter in ubiquitin) cross-links involve residues Lys342 and Lys403. 2 disordered regions span residues 589 to 611 (QRDT…NEGL) and 677 to 754 (WQGF…TTSL). Residues 701–710 (EEPPATPPLP) are compositionally biased toward pro residues. Residues 719–734 (DGSTQTDGPADSTSAC) are compositionally biased toward polar residues. 2 positions are modified to phosphoserine: Ser753 and Ser756. A PDZ-binding motif is present at residues 770 to 773 (EILI).

It belongs to the angiomotin family. As to quaternary structure, part of a complex composed of AMOTL2, MAGI1 and CDH5, within the complex AMOTL2 acts as a scaffold protein for the interaction of MAGI1 with CDH5. The complex is required for coupling actin fibers to cell junctions in endothelial cells. Within the complex AMOTL2 (via its N-terminus) interacts with CDH5. Interacts (via N-terminus) with MAGI1. Interacts (via N-terminus) with ACTB; the interaction facilitates binding of cell junction complexes to actin fibers in endothelial cells. Interacts with CDH1; the interaction may facilitate binding of radial actin fibers to cell junction complexes. Interacts with SRC. Interacts with YAP1; the interaction is required for ubiquitination of AMOTL2 and localization of YAP1 to tight junctions. Interacts with WWP1; the interaction facilitates WWP1 interaction with the Crumbs complex and subsequent WWP1 translocation to the plasma membrane. WWP1 interaction with the Crumbs complex promotes WWP1 monoubiquitination of AMOTL2 which subsequently activates the Hippo signaling pathway. When ubiquitinated interacts with LATS2 (via UBA domain); the interaction promotes LATS2 phosphorylation of YAP1. Interacts (via PPXY motif) with WWTR1/TAZ (via WW domain); the interaction promotes WWTR1/TAZ localization to the cytoplasm and thereby inhibition of its transcriptional properties. Interacts with PHLDB2; interaction may facilitate PHLDB2 localization to the myotube podosome cortex that surrounds the core. In terms of processing, monoubiquitinated at Lys-342 and Lys-403 by Crumbs complex-bound WWP1. De-ubiquitinated at Lys-342 and Lys-403 by USP9X; the interaction may be promoted by cell contact inhibition. Deubiquitination of AMOTL2 negatively regulates Hippo signaling activation. Phosphorylation at Tyr-107 is necessary for efficient binding to SRC and synergistically functioning with SRC to activate the downstream MAPK pathway.

It localises to the recycling endosome. The protein localises to the cytoplasm. The protein resides in the cell projection. Its subcellular location is the podosome. It is found in the cell junction. Regulates the translocation of phosphorylated SRC to peripheral cell-matrix adhesion sites. Required for proper architecture of actin filaments. Plays a role in coupling actin fibers to cell junctions in endothelial cells and is therefore required for correct endothelial cell morphology via facilitating transcellular transmission of mechanical force resulting in endothelial cell elongation. Required for the anchoring of radial actin fibers to CDH1 junction complexes at the cell membrane which facilitates organization of radial actin fiber structure and cellular response to contractile forces. This contributes to maintenance of cell area, size, shape, epithelial sheet organization and trophectoderm cell properties that facilitate blastocyst zona hatching. Inhibits the Wnt/beta-catenin signaling pathway, probably by recruiting CTNNB1 to recycling endosomes and hence preventing its translocation to the nucleus. Participates in angiogenesis. Activates the Hippo signaling pathway in response to cell contact inhibition via interaction with and ubiquitination by Crumbs complex-bound WWP1. Ubiquitinated AMOTL2 then interacts with LATS2 which in turn phosphorylates YAP1, excluding it from the nucleus and localizing it to the cytoplasm and tight junctions, therefore ultimately repressing YAP1-driven transcription of target genes. Acts to inhibit WWTR1/TAZ transcriptional coactivator activity via sequestering WWTR1/TAZ in the cytoplasm and at tight junctions. Regulates the size and protein composition of the podosome cortex and core at myofibril neuromuscular junctions. Selectively promotes FGF-induced MAPK activation through SRC. May play a role in the polarity, proliferation and migration of endothelial cells. The chain is Angiomotin-like protein 2 from Rattus norvegicus (Rat).